The following is a 111-amino-acid chain: WAP four-disulfide core domain protein 12 (111 aa).

Residues 1 to 23 (MRSSRFLVLMVSLALVTLVASEG) form the signal peptide. The WAP domain occupies 27 to 74 (NTEKPGVCPADNVRCIKSDPPQCHTDQDCQGIRKCCYLHCGFKCVIPV). Intrachain disulfides connect Cys34-Cys62, Cys41-Cys66, Cys49-Cys61, and Cys55-Cys70.

The protein localises to the secreted. Functionally, antibacterial protein. Putative acid-stable proteinase inhibitor. The protein is WAP four-disulfide core domain protein 12 (WFDC12) of Saimiri boliviensis boliviensis (Bolivian squirrel monkey).